Reading from the N-terminus, the 359-residue chain is Tyrosine-protein phosphatase non-receptor type 7 (359 aa).

The tract at residues 1-34 (MVQACEGRSRAQLPTLSLGADMTQPPPAKAPAKK) is disordered. Residues 38–51 (LQERRGSSVALMLD) form an interaction with MAP kinases region. A Phosphoserine modification is found at Ser-44. Thr-66 carries the post-translational modification Phosphothreonine. 2 positions are modified to phosphoserine: Ser-93 and Ser-143. The region spanning 97 to 349 (LEEEFLKIPS…QFLHHTLALY (253 aa)) is the Tyrosine-protein phosphatase domain. Residues Asp-257, 290 to 296 (CSAGIGR), and Gln-334 contribute to the substrate site. Cys-290 functions as the Phosphocysteine intermediate in the catalytic mechanism. Cys-290 carries the cysteine sulfenic acid (-SOH) modification.

The protein belongs to the protein-tyrosine phosphatase family. Non-receptor class subfamily. In terms of processing, oxidized at active site cysteine. Treatment with pervanadate (vanadate and H(2)O(2)) or with antigen enhanced oxidation of active site cysteine.

The protein localises to the cytoplasm. Its subcellular location is the cytoskeleton. It catalyses the reaction O-phospho-L-tyrosyl-[protein] + H2O = L-tyrosyl-[protein] + phosphate. Inhibited in cells after FCER1A triggering. In terms of biological role, may play a role in the regulation of T and B-lymphocyte development and signal transduction. The chain is Tyrosine-protein phosphatase non-receptor type 7 (Ptpn7) from Rattus norvegicus (Rat).